Consider the following 630-residue polypeptide: ATP synthase subunit alpha (630 aa).

Glycine 173–threonine 180 contacts ATP. A disordered region spans residues alanine 592–lysine 630. Acidic residues predominate over residues alanine 599 to alanine 611.

It belongs to the ATPase alpha/beta chains family. In terms of assembly, F-type ATPases have 2 components, CF(1) - the catalytic core - and CF(0) - the membrane proton channel. CF(1) has five subunits: alpha(3), beta(3), gamma(1), delta(1), epsilon(1). CF(0) has three main subunits: a(1), b(2) and c(9-12). The alpha and beta chains form an alternating ring which encloses part of the gamma chain. CF(1) is attached to CF(0) by a central stalk formed by the gamma and epsilon chains, while a peripheral stalk is formed by the delta and b chains.

Its subcellular location is the cell inner membrane. The enzyme catalyses ATP + H2O + 4 H(+)(in) = ADP + phosphate + 5 H(+)(out). Functionally, produces ATP from ADP in the presence of a proton gradient across the membrane. The alpha chain is a regulatory subunit. This is ATP synthase subunit alpha from Sorangium cellulosum (strain So ce56) (Polyangium cellulosum (strain So ce56)).